The sequence spans 206 residues: MRVVVPFGGRDPKTRLAPFFDADERREFAVSMLRDVLDAVRAVGGDPAVVADALVTVDAPVTVDDRPLTEVVGGELDDLGGGPVAVVMADLALATPAALSRLFETDADVVAAPGLGGGTNALVVRHPEFSVDYHGASILDHRRIARDAGCSFAEVDSMRLAVDVDEPSDLVEVLVHGEGRAREWLVDAGVRLARGSGRVEAVRERR.

This sequence belongs to the CofC family. Homodimer.

The enzyme catalyses (2S)-2-phospholactate + GTP + H(+) = (2S)-lactyl-2-diphospho-5'-guanosine + diphosphate. It participates in cofactor biosynthesis; coenzyme F420 biosynthesis. In terms of biological role, guanylyltransferase that catalyzes the activation of (2S)-2-phospholactate (2-PL) as (2S)-lactyl-2-diphospho-5'-guanosine, via the condensation of 2-PL with GTP. It is involved in the biosynthesis of coenzyme F420, a hydride carrier cofactor. This chain is 2-phospho-L-lactate guanylyltransferase, found in Haloferax volcanii (strain ATCC 29605 / DSM 3757 / JCM 8879 / NBRC 14742 / NCIMB 2012 / VKM B-1768 / DS2) (Halobacterium volcanii).